The sequence spans 309 residues: Peptide methionine sulfoxide reductase MsrA/MsrB (309 aa).

A peptide methionine sulfoxide reductase A region spans residues 1–153 (MIYLAEGCFW…PNGYCHIDIN (153 aa)). C8 is a catalytic residue. Residues 170 to 293 (ATEIKAKLSA…NSLSITFIPK (124 aa)) enclose the MsrB domain. C282 serves as the catalytic Nucleophile.

This sequence in the N-terminal section; belongs to the MsrA Met sulfoxide reductase family. The protein in the C-terminal section; belongs to the MsrB Met sulfoxide reductase family.

It carries out the reaction L-methionyl-[protein] + [thioredoxin]-disulfide + H2O = L-methionyl-(S)-S-oxide-[protein] + [thioredoxin]-dithiol. The enzyme catalyses [thioredoxin]-disulfide + L-methionine + H2O = L-methionine (S)-S-oxide + [thioredoxin]-dithiol. It catalyses the reaction L-methionyl-[protein] + [thioredoxin]-disulfide + H2O = L-methionyl-(R)-S-oxide-[protein] + [thioredoxin]-dithiol. Functionally, has an important function as a repair enzyme for proteins that have been inactivated by oxidation. Catalyzes the reversible oxidation-reduction of methionine sulfoxide in proteins to methionine. This chain is Peptide methionine sulfoxide reductase MsrA/MsrB (msrAB), found in Streptococcus pyogenes serotype M3 (strain ATCC BAA-595 / MGAS315).